A 254-amino-acid chain; its full sequence is Hydroxyacylglutathione hydrolase (254 aa).

Positions 52, 54, 56, 57, 109, 126, and 164 each coordinate Zn(2+).

This sequence belongs to the metallo-beta-lactamase superfamily. Glyoxalase II family. Monomer. The cofactor is Zn(2+).

It catalyses the reaction an S-(2-hydroxyacyl)glutathione + H2O = a 2-hydroxy carboxylate + glutathione + H(+). Its pathway is secondary metabolite metabolism; methylglyoxal degradation; (R)-lactate from methylglyoxal: step 2/2. Thiolesterase that catalyzes the hydrolysis of S-D-lactoyl-glutathione to form glutathione and D-lactic acid. This Stenotrophomonas maltophilia (strain R551-3) protein is Hydroxyacylglutathione hydrolase.